A 174-amino-acid chain; its full sequence is uncharacterized protein (174 aa).

Basic and acidic residues-rich tracts occupy residues 1–31 and 52–67; these read MDKHGVKTPLWKKETEELRAEDAEQEEGKEG and EPPRVAEEGEGRERRS. The disordered stretch occupies residues 1-69; sequence MDKHGVKTPL…GEGRERRSVS (69 aa).

This is an uncharacterized protein from Homo sapiens (Human).